A 170-amino-acid chain; its full sequence is Shikimate kinase (170 aa).

Residue 15-20 (GAGKTT) participates in ATP binding. Position 19 (Thr19) interacts with Mg(2+). Positions 37, 61, and 83 each coordinate substrate. Arg121 lines the ATP pocket. Arg140 contributes to the substrate binding site.

It belongs to the shikimate kinase family. In terms of assembly, monomer. Requires Mg(2+) as cofactor.

It localises to the cytoplasm. It catalyses the reaction shikimate + ATP = 3-phosphoshikimate + ADP + H(+). It participates in metabolic intermediate biosynthesis; chorismate biosynthesis; chorismate from D-erythrose 4-phosphate and phosphoenolpyruvate: step 5/7. Its function is as follows. Catalyzes the specific phosphorylation of the 3-hydroxyl group of shikimic acid using ATP as a cosubstrate. The sequence is that of Shikimate kinase from Neisseria gonorrhoeae (strain ATCC 700825 / FA 1090).